Reading from the N-terminus, the 301-residue chain is NADH-cytochrome b5 reductase 3 (301 aa).

Gly-2 carries N-myristoyl glycine lipidation. The FAD-binding FR-type domain occupies 40-152 (DIKYPLRLID…RGPNGLLVYQ (113 aa)). An N6-acetyllysine modification is found at Lys-42. Residue Tyr-43 is modified to Phosphotyrosine. Lys-50 is subject to N6-acetyllysine. FAD contacts are provided by Arg-92, Pro-93, Tyr-94, Val-109, Lys-111, and Phe-114. Lys-120 is subject to N6-acetyllysine. Residues Lys-126, Met-127, Ser-128, and Thr-185 each contribute to the FAD site.

This sequence belongs to the flavoprotein pyridine nucleotide cytochrome reductase family. Component of a complex composed of cytochrome b5, NADH-cytochrome b5 reductase (CYB5R3) and MTARC2. Interacts with MTLN; the interaction is required to maintain cellular lipid composition and leads to stimulation of mitochondrial respiratory complex I activity. The cofactor is FAD.

The protein resides in the endoplasmic reticulum membrane. It is found in the mitochondrion outer membrane. The enzyme catalyses 2 Fe(III)-[cytochrome b5] + NADH = 2 Fe(II)-[cytochrome b5] + NAD(+) + H(+). Its function is as follows. Catalyzes the reduction of two molecules of cytochrome b5 using NADH as the electron donor. The polypeptide is NADH-cytochrome b5 reductase 3 (Mus musculus (Mouse)).